Reading from the N-terminus, the 404-residue chain is Probable tRNA sulfurtransferase (404 aa).

Positions 60-165 constitute a THUMP domain; the sequence is QPIVEALKLV…DEAAYISYEE (106 aa). Residues 183–184, 208–209, Arg265, Gly287, and Gln296 contribute to the ATP site; these read ML and HF.

Belongs to the ThiI family.

It localises to the cytoplasm. The enzyme catalyses [ThiI sulfur-carrier protein]-S-sulfanyl-L-cysteine + a uridine in tRNA + 2 reduced [2Fe-2S]-[ferredoxin] + ATP + H(+) = [ThiI sulfur-carrier protein]-L-cysteine + a 4-thiouridine in tRNA + 2 oxidized [2Fe-2S]-[ferredoxin] + AMP + diphosphate. It carries out the reaction [ThiS sulfur-carrier protein]-C-terminal Gly-Gly-AMP + S-sulfanyl-L-cysteinyl-[cysteine desulfurase] + AH2 = [ThiS sulfur-carrier protein]-C-terminal-Gly-aminoethanethioate + L-cysteinyl-[cysteine desulfurase] + A + AMP + 2 H(+). It functions in the pathway cofactor biosynthesis; thiamine diphosphate biosynthesis. Its function is as follows. Catalyzes the ATP-dependent transfer of a sulfur to tRNA to produce 4-thiouridine in position 8 of tRNAs, which functions as a near-UV photosensor. Also catalyzes the transfer of sulfur to the sulfur carrier protein ThiS, forming ThiS-thiocarboxylate. This is a step in the synthesis of thiazole, in the thiamine biosynthesis pathway. The sulfur is donated as persulfide by IscS. The polypeptide is Probable tRNA sulfurtransferase (Streptococcus pyogenes serotype M2 (strain MGAS10270)).